The following is a 308-amino-acid chain: Probable manganese-dependent inorganic pyrophosphatase (308 aa).

Residues His9, Asp13, Asp15, Asp75, His97, and Asp149 each contribute to the Mn(2+) site.

It belongs to the PPase class C family. Mn(2+) serves as cofactor.

It is found in the cytoplasm. The catalysed reaction is diphosphate + H2O = 2 phosphate + H(+). This chain is Probable manganese-dependent inorganic pyrophosphatase, found in Enterococcus faecalis (strain ATCC 700802 / V583).